Reading from the N-terminus, the 344-residue chain is Krueppel-like factor 3 (344 aa).

Residues 1–74 form a repressor domain region; sequence MLMFDPVPVK…TVNKRGSPPA (74 aa). Lysine 10 is covalently cross-linked (Glycyl lysine isopeptide (Lys-Gly) (interchain with G-Cter in SUMO)). The short motif at 60 to 68 is the 9aaTAD; inactive element; that stretch reads EPVDLTVNK. Positions 61-65 match the CTBP-binding motif motif; that stretch reads PVDLT. The interval 66 to 111 is disordered; sequence VNKRGSPPAAGGSPSSLKFPSHRRASPGLSMPSSSPPIKKYSPPSP. Lysine 68 participates in a covalent cross-link: Glycyl lysine isopeptide (Lys-Gly) (interchain with G-Cter in SUMO2). Low complexity-rich tracts occupy residues 70–81 and 91–107; these read GSPPAAGGSPSS and SPGL…KKYS. Phosphoserine occurs at positions 71, 91, 100, 107, and 110. Residue lysine 195 forms a Glycyl lysine isopeptide (Lys-Gly) (interchain with G-Cter in SUMO2) linkage. Lysine 197 is covalently cross-linked (Glycyl lysine isopeptide (Lys-Gly) (interchain with G-Cter in SUMO); alternate). A Glycyl lysine isopeptide (Lys-Gly) (interchain with G-Cter in SUMO2); alternate cross-link involves residue lysine 197. Phosphoserine is present on residues serine 215, serine 223, and serine 249. The disordered stretch occupies residues 235–254; the sequence is SVIVQPGKRPLPVESPDTQR. 3 C2H2-type zinc fingers span residues 259-283, 289-313, and 319-341; these read HRCD…RRTH, YKCT…FRKH, and FQCP…RKRH.

The protein belongs to the krueppel C2H2-type zinc-finger protein family. In terms of assembly, monomer. Post-translationally, sumoylated with SUMO1. Sumoylation is enhanced by PIAS1, PIAS2alpha and PIAS2beta, and PIAS4, but not by Pc2. Enhances transcriptional repression, but has no effect on DNA binding. Sumoylation on Lys-197 is the major site. In 8.5 day embryos, expressed in midbrain, anterior hindbrain and ventral forebrain. In 9 day embryos, expressed throughout ventral anterior half of embryo including midbrain-hindbrain junction, ventral midbrain, diencephalon and forebrain. At 10.5 days, distribution is more widespread with expression also found in developing limb buds. Widely expressed in the adult.

The protein resides in the nucleus. Binds to the CACCC box of erythroid cell-expressed genes. May play a role in hematopoiesis. This is Krueppel-like factor 3 (Klf3) from Mus musculus (Mouse).